We begin with the raw amino-acid sequence, 79 residues long: Conotoxin Cl9.4 (79 aa).

The N-terminal stretch at M1–A23 is a signal peptide. Residues G24–D37 constitute a propeptide that is removed on maturation. 3 disulfide bridges follow: C41–C58, C46–C68, and C48–C73.

Expressed by the venom duct.

Its subcellular location is the secreted. The sequence is that of Conotoxin Cl9.4 from Californiconus californicus (California cone).